Consider the following 366-residue polypeptide: Chorismate synthase (366 aa).

NADP(+) is bound by residues R48 and R54. Residues 125-127 (RSS), 238-239 (NA), G278, 293-297 (KPTSS), and R319 each bind FMN.

It belongs to the chorismate synthase family. As to quaternary structure, homotetramer. FMNH2 serves as cofactor.

The catalysed reaction is 5-O-(1-carboxyvinyl)-3-phosphoshikimate = chorismate + phosphate. It functions in the pathway metabolic intermediate biosynthesis; chorismate biosynthesis; chorismate from D-erythrose 4-phosphate and phosphoenolpyruvate: step 7/7. Functionally, catalyzes the anti-1,4-elimination of the C-3 phosphate and the C-6 proR hydrogen from 5-enolpyruvylshikimate-3-phosphate (EPSP) to yield chorismate, which is the branch point compound that serves as the starting substrate for the three terminal pathways of aromatic amino acid biosynthesis. This reaction introduces a second double bond into the aromatic ring system. The chain is Chorismate synthase from Herminiimonas arsenicoxydans.